We begin with the raw amino-acid sequence, 496 residues long: Galactose/methyl galactoside import ATP-binding protein MglA (496 aa).

ABC transporter domains follow at residues 5 to 240 (LTIR…VGRT) and 243 to 496 (KRFP…ARYL). 37–44 (GENGAGKS) contributes to the ATP binding site.

This sequence belongs to the ABC transporter superfamily. Galactose/methyl galactoside importer (TC 3.A.1.2.3) family. As to quaternary structure, the complex is composed of one ATP-binding protein (MglA), two transmembrane proteins (MglC) and a solute-binding protein (MglB).

It localises to the cell inner membrane. It carries out the reaction D-galactose(out) + ATP + H2O = D-galactose(in) + ADP + phosphate + H(+). The catalysed reaction is methyl beta-D-galactoside(out) + ATP + H2O = methyl beta-D-galactoside(in) + ADP + phosphate + H(+). Part of the ABC transporter complex MglABC involved in galactose/methyl galactoside import. Responsible for energy coupling to the transport system. The sequence is that of Galactose/methyl galactoside import ATP-binding protein MglA from Treponema pallidum (strain Nichols).